A 280-amino-acid chain; its full sequence is Octanoyl-[GcvH]:protein N-octanoyltransferase (280 aa).

Residues glutamine 40–asparagine 245 enclose the BPL/LPL catalytic domain. Cysteine 144 serves as the catalytic Acyl-thioester intermediate.

This sequence belongs to the octanoyltransferase LipL family.

The catalysed reaction is N(6)-octanoyl-L-lysyl-[glycine-cleavage complex H protein] + L-lysyl-[lipoyl-carrier protein] = N(6)-octanoyl-L-lysyl-[lipoyl-carrier protein] + L-lysyl-[glycine-cleavage complex H protein]. The protein operates within protein modification; protein lipoylation via endogenous pathway; protein N(6)-(lipoyl)lysine from octanoyl-[acyl-carrier-protein]. Functionally, catalyzes the amidotransfer (transamidation) of the octanoyl moiety from octanoyl-GcvH to the lipoyl domain of the E2 subunit of lipoate-dependent enzymes. The chain is Octanoyl-[GcvH]:protein N-octanoyltransferase from Exiguobacterium sp. (strain ATCC BAA-1283 / AT1b).